The chain runs to 164 residues: Pheromone-binding protein 2 (164 aa).

Positions 1–22 are cleaved as a signal peptide; sequence MIRKVLLSVLLAVLMTINLGQA. Disulfide bonds link C41–C76, C72–C130, and C119–C139.

This sequence belongs to the PBP/GOBP family. Antenna.

Its function is as follows. This major soluble protein in olfactory sensilla of male moths might serve to solubilize the extremely hydrophobic pheromone molecules and to transport pheromone through the aqueous lymph to receptors located on olfactory cilia. This chain is Pheromone-binding protein 2, found in Antheraea pernyi (Chinese oak silk moth).